The chain runs to 734 residues: Photosystem I P700 chlorophyll a apoprotein A2 (734 aa).

Helical transmembrane passes span 46 to 69 (IFAS…FHVA), 135 to 158 (LYSG…LHLQ), 175 to 199 (LNHH…HVAI), 273 to 291 (MAHH…GHMY), 330 to 353 (LHFQ…QHMY), 369 to 395 (AALY…IFFI), 417 to 439 (AIIS…LYVH), and 517 to 535 (FLVH…LILV). Positions 559 and 568 each coordinate [4Fe-4S] cluster. 2 helical membrane-spanning segments follow: residues 575–596 (AFYL…YWHW) and 643–665 (LSVW…MFLI). Histidine 654, methionine 662, and tyrosine 670 together coordinate chlorophyll a. Tryptophan 671 provides a ligand contact to phylloquinone. A helical membrane pass occupies residues 707-727 (LVGLAHFSVGYIFTYAAFLIA).

The protein belongs to the PsaA/PsaB family. The PsaA/B heterodimer binds the P700 chlorophyll special pair and subsequent electron acceptors. PSI consists of a core antenna complex that captures photons, and an electron transfer chain that converts photonic excitation into a charge separation. The eukaryotic PSI reaction center is composed of at least 11 subunits. P700 is a chlorophyll a/chlorophyll a' dimer, A0 is one or more chlorophyll a, A1 is one or both phylloquinones and FX is a shared 4Fe-4S iron-sulfur center. is required as a cofactor.

Its subcellular location is the plastid. The protein localises to the chloroplast thylakoid membrane. The catalysed reaction is reduced [plastocyanin] + hnu + oxidized [2Fe-2S]-[ferredoxin] = oxidized [plastocyanin] + reduced [2Fe-2S]-[ferredoxin]. In terms of biological role, psaA and PsaB bind P700, the primary electron donor of photosystem I (PSI), as well as the electron acceptors A0, A1 and FX. PSI is a plastocyanin-ferredoxin oxidoreductase, converting photonic excitation into a charge separation, which transfers an electron from the donor P700 chlorophyll pair to the spectroscopically characterized acceptors A0, A1, FX, FA and FB in turn. Oxidized P700 is reduced on the lumenal side of the thylakoid membrane by plastocyanin. The sequence is that of Photosystem I P700 chlorophyll a apoprotein A2 from Antirrhinum majus (Garden snapdragon).